The chain runs to 322 residues: Phosphatidylserine decarboxylase proenzyme (322 aa).

Catalysis depends on charge relay system; for autoendoproteolytic cleavage activity residues aspartate 90, histidine 147, and serine 254. Serine 254 (schiff-base intermediate with substrate; via pyruvic acid; for decarboxylase activity) is an active-site residue. At serine 254 the chain carries Pyruvic acid (Ser); by autocatalysis. The tract at residues 293 to 322 is disordered; that stretch reads PDAEPAPLPAEEIEAEHDASPLVDDKKDQV. A compositionally biased stretch (basic and acidic residues) spans 308–322; sequence EHDASPLVDDKKDQV.

It belongs to the phosphatidylserine decarboxylase family. PSD-B subfamily. Prokaryotic type I sub-subfamily. Heterodimer of a large membrane-associated beta subunit and a small pyruvoyl-containing alpha subunit. It depends on pyruvate as a cofactor. Post-translationally, is synthesized initially as an inactive proenzyme. Formation of the active enzyme involves a self-maturation process in which the active site pyruvoyl group is generated from an internal serine residue via an autocatalytic post-translational modification. Two non-identical subunits are generated from the proenzyme in this reaction, and the pyruvate is formed at the N-terminus of the alpha chain, which is derived from the carboxyl end of the proenzyme. The autoendoproteolytic cleavage occurs by a canonical serine protease mechanism, in which the side chain hydroxyl group of the serine supplies its oxygen atom to form the C-terminus of the beta chain, while the remainder of the serine residue undergoes an oxidative deamination to produce ammonia and the pyruvoyl prosthetic group on the alpha chain. During this reaction, the Ser that is part of the protease active site of the proenzyme becomes the pyruvoyl prosthetic group, which constitutes an essential element of the active site of the mature decarboxylase.

The protein localises to the cell membrane. It carries out the reaction a 1,2-diacyl-sn-glycero-3-phospho-L-serine + H(+) = a 1,2-diacyl-sn-glycero-3-phosphoethanolamine + CO2. It functions in the pathway phospholipid metabolism; phosphatidylethanolamine biosynthesis; phosphatidylethanolamine from CDP-diacylglycerol: step 2/2. Its function is as follows. Catalyzes the formation of phosphatidylethanolamine (PtdEtn) from phosphatidylserine (PtdSer). The protein is Phosphatidylserine decarboxylase proenzyme of Escherichia coli O45:K1 (strain S88 / ExPEC).